The chain runs to 508 residues: Photosystem II CP47 reaction center protein (508 aa).

A run of 6 helical transmembrane segments spans residues 21–36, 101–115, 140–156, 203–218, 237–252, and 457–472; these read AVHI…WAGS, IILS…IWHW, GIHL…FGAF, IAAG…FHLS, VLSS…AFVV, and NFAL…HGGR.

Belongs to the PsbB/PsbC family. PsbB subfamily. As to quaternary structure, PSII is composed of 1 copy each of membrane proteins PsbA, PsbB, PsbC, PsbD, PsbE, PsbF, PsbH, PsbI, PsbJ, PsbK, PsbL, PsbM, PsbT, PsbX, PsbY, PsbZ, Psb30/Ycf12, at least 3 peripheral proteins of the oxygen-evolving complex and a large number of cofactors. It forms dimeric complexes. Binds multiple chlorophylls. PSII binds additional chlorophylls, carotenoids and specific lipids. is required as a cofactor.

It is found in the plastid. Its subcellular location is the chloroplast thylakoid membrane. In terms of biological role, one of the components of the core complex of photosystem II (PSII). It binds chlorophyll and helps catalyze the primary light-induced photochemical processes of PSII. PSII is a light-driven water:plastoquinone oxidoreductase, using light energy to abstract electrons from H(2)O, generating O(2) and a proton gradient subsequently used for ATP formation. This chain is Photosystem II CP47 reaction center protein, found in Chaetosphaeridium globosum (Charophycean green alga).